The following is a 160-amino-acid chain: MAKVDVVERVTEIIAEVGAPLGIELVDLEYKREGRDMVVRVFLEKREGGINLDDCAEVSRQLSDILDVEDFMPERYTLEVSSPGICRPLKKVVDYERFMGHLIKVKTFEMLPDEAGNKRKTFTGKLTGIADGVIGIDLTEGQHARVPLDKVAKAHLEFEF.

Belongs to the RimP family.

Its subcellular location is the cytoplasm. Functionally, required for maturation of 30S ribosomal subunits. The chain is Ribosome maturation factor RimP from Geobacter sp. (strain M21).